The following is a 199-amino-acid chain: Recombination protein RecR (199 aa).

The C4-type zinc finger occupies 57–72; that stretch reads CQQCRTFTEQNLCAIC. Positions 81-176 constitute a Toprim domain; that stretch reads GMICVVEMPV…KVSRIAHGVP (96 aa).

This sequence belongs to the RecR family.

In terms of biological role, may play a role in DNA repair. It seems to be involved in an RecBC-independent recombinational process of DNA repair. It may act with RecF and RecO. The protein is Recombination protein RecR of Psychromonas ingrahamii (strain DSM 17664 / CCUG 51855 / 37).